The sequence spans 308 residues: MDLSASRSDGGDPLRPASPRLRSPVSDGGDPLRPASPRLRSPVSDGGDPLRPASPRLRSPLGASRPVVGLTAYLEQVRTGVWDIPAGYLPADYFEGITMAGGVAVLLPPQPVDPESVGCVLDSLHALVITGGYDLDPAAYGQEPHPATDHPRPGRDAWEFALLRGALQRGMPVLGICRGTQVLNVALGGTLHQHLPDILGHSGHRAGNGVFTRLPVHTASGTRLAELIGESADVPCYHHQAIDQVGEGLVVSAVDVDGVIEALELPGDTFVLAVQWHPEKSLDDLRLFKALVDAASGYAGRQSQAEPR.

The tract at residues 1-62 (MDLSASRSDG…ASPRLRSPLG (62 aa)) is disordered. Composition is skewed to low complexity over residues 13 to 24 (PLRPASPRLRSP), 31 to 42 (PLRPASPRLRSP), and 49 to 61 (PLRPASPRLRSPL). Residues 78–301 (RTGVWDIPAG…VDAASGYAGR (224 aa)) enclose the Glutamine amidotransferase type-1 domain. The active-site Nucleophile is cysteine 177. Residues histidine 277 and glutamate 279 contribute to the active site. Lysine 289 is covalently cross-linked (Isoglutamyl lysine isopeptide (Lys-Gln) (interchain with Q-Cter in protein Pup)).

The polypeptide is Putative glutamine amidotransferase Rv2859c (Mycobacterium tuberculosis (strain ATCC 25618 / H37Rv)).